Here is a 308-residue protein sequence, read N- to C-terminus: Protein translocase subunit SecF (308 aa).

6 consecutive transmembrane segments (helical) span residues Phe-14–Phe-34, Val-134–Phe-154, Ile-158–Leu-178, Thr-185–Phe-205, Ser-238–Ile-258, and Leu-267–Val-287.

It belongs to the SecD/SecF family. SecF subfamily. As to quaternary structure, forms a complex with SecD. Part of the essential Sec protein translocation apparatus which comprises SecA, SecYEG and auxiliary proteins SecDF. Other proteins may also be involved.

It localises to the cell membrane. Its function is as follows. Part of the Sec protein translocase complex. Interacts with the SecYEG preprotein conducting channel. SecDF uses the proton motive force (PMF) to complete protein translocation after the ATP-dependent function of SecA. The sequence is that of Protein translocase subunit SecF from Alicyclobacillus acidocaldarius subsp. acidocaldarius (strain ATCC 27009 / DSM 446 / BCRC 14685 / JCM 5260 / KCTC 1825 / NBRC 15652 / NCIMB 11725 / NRRL B-14509 / 104-IA) (Bacillus acidocaldarius).